The sequence spans 151 residues: Small ribosomal subunit protein uS19 (151 aa).

Positions 1-23 are disordered; that stretch reads MVVNKQGSVKSIKRKARKSRKVT. The segment covering 11 to 23 has biased composition (basic residues); it reads SIKRKARKSRKVT.

Belongs to the universal ribosomal protein uS19 family.

Its function is as follows. Protein S19 forms a complex with S13 that binds strongly to the 16S ribosomal RNA. The chain is Small ribosomal subunit protein uS19 (rps19) from Thermoplasma volcanium (strain ATCC 51530 / DSM 4299 / JCM 9571 / NBRC 15438 / GSS1).